A 357-amino-acid chain; its full sequence is Histidinol-phosphate aminotransferase 1 (357 aa).

Lys-210 carries the post-translational modification N6-(pyridoxal phosphate)lysine.

Belongs to the class-II pyridoxal-phosphate-dependent aminotransferase family. Histidinol-phosphate aminotransferase subfamily. Homodimer. Requires pyridoxal 5'-phosphate as cofactor.

The enzyme catalyses L-histidinol phosphate + 2-oxoglutarate = 3-(imidazol-4-yl)-2-oxopropyl phosphate + L-glutamate. It participates in amino-acid biosynthesis; L-histidine biosynthesis; L-histidine from 5-phospho-alpha-D-ribose 1-diphosphate: step 7/9. The sequence is that of Histidinol-phosphate aminotransferase 1 from Methylococcus capsulatus (strain ATCC 33009 / NCIMB 11132 / Bath).